The primary structure comprises 456 residues: Bifunctional protein GlmU (456 aa).

Residues 1–227 are pyrophosphorylase; that stretch reads MKLRVVILAA…AQEVEGANNR (227 aa). UDP-N-acetyl-alpha-D-glucosamine contacts are provided by residues 8 to 11, Lys22, Gln73, 78 to 79, 100 to 102, Gly137, Glu152, Asn167, and Asn225; these read LAAG, GT, and YGD. Asp102 serves as a coordination point for Mg(2+). Asn225 contacts Mg(2+). Positions 228–248 are linker; the sequence is QQLASLERALQQRQAEELMTQ. Residues 249–456 are N-acetyltransferase; the sequence is GVTLIDPARF…WQRPQSKKGT (208 aa). Residues Arg331 and Lys349 each contribute to the UDP-N-acetyl-alpha-D-glucosamine site. Residue His361 is the Proton acceptor of the active site. 2 residues coordinate UDP-N-acetyl-alpha-D-glucosamine: Tyr364 and Asn375. Residues Ala378, 384-385, Ser403, Ala421, and Arg438 contribute to the acetyl-CoA site; that span reads NY.

In the N-terminal section; belongs to the N-acetylglucosamine-1-phosphate uridyltransferase family. This sequence in the C-terminal section; belongs to the transferase hexapeptide repeat family. In terms of assembly, homotrimer. Mg(2+) is required as a cofactor.

The protein resides in the cytoplasm. The enzyme catalyses alpha-D-glucosamine 1-phosphate + acetyl-CoA = N-acetyl-alpha-D-glucosamine 1-phosphate + CoA + H(+). It catalyses the reaction N-acetyl-alpha-D-glucosamine 1-phosphate + UTP + H(+) = UDP-N-acetyl-alpha-D-glucosamine + diphosphate. Its pathway is nucleotide-sugar biosynthesis; UDP-N-acetyl-alpha-D-glucosamine biosynthesis; N-acetyl-alpha-D-glucosamine 1-phosphate from alpha-D-glucosamine 6-phosphate (route II): step 2/2. It participates in nucleotide-sugar biosynthesis; UDP-N-acetyl-alpha-D-glucosamine biosynthesis; UDP-N-acetyl-alpha-D-glucosamine from N-acetyl-alpha-D-glucosamine 1-phosphate: step 1/1. The protein operates within bacterial outer membrane biogenesis; LPS lipid A biosynthesis. Functionally, catalyzes the last two sequential reactions in the de novo biosynthetic pathway for UDP-N-acetylglucosamine (UDP-GlcNAc). The C-terminal domain catalyzes the transfer of acetyl group from acetyl coenzyme A to glucosamine-1-phosphate (GlcN-1-P) to produce N-acetylglucosamine-1-phosphate (GlcNAc-1-P), which is converted into UDP-GlcNAc by the transfer of uridine 5-monophosphate (from uridine 5-triphosphate), a reaction catalyzed by the N-terminal domain. The chain is Bifunctional protein GlmU from Idiomarina loihiensis (strain ATCC BAA-735 / DSM 15497 / L2-TR).